An 894-amino-acid chain; its full sequence is DNA mismatch repair protein MutS (894 aa).

629-636 serves as a coordination point for ATP; sequence GPNMGGKS. A disordered region spans residues 819-840; sequence TPTPQLDLFAPPPHPDTSDDDE.

This sequence belongs to the DNA mismatch repair MutS family.

This protein is involved in the repair of mismatches in DNA. It is possible that it carries out the mismatch recognition step. This protein has a weak ATPase activity. This chain is DNA mismatch repair protein MutS, found in Cupriavidus pinatubonensis (strain JMP 134 / LMG 1197) (Cupriavidus necator (strain JMP 134)).